A 228-amino-acid polypeptide reads, in one-letter code: Cell surface Cu-only superoxide dismutase 5 (228 aa).

A signal peptide spans 1–15 (MKYLSIFLLATFALA). Asn53 carries an N-linked (GlcNAc...) asparagine glycan. His75 and His77 together coordinate Cu cation. An N-linked (GlcNAc...) asparagine glycan is attached at Asn86. The cysteines at positions 87 and 162 are disulfide-linked. His93 provides a ligand contact to Cu cation. An N-linked (GlcNAc...) asparagine glycan is attached at Asn98. His153 lines the Cu cation pocket. N-linked (GlcNAc...) asparagine glycans are attached at residues Asn156, Asn164, Asn176, Asn181, and Asn192. Low complexity predominate over residues 176 to 201 (NTTMSNSSSSSSQSAVNTSSSMASTA). Residues 176 to 204 (NTTMSNSSSSSSQSAVNTSSSMASTAPQG) form a disordered region. The GPI-anchor amidated asparagine moiety is linked to residue Asn205. Residues 206–228 (GAERAVVNGLLAAGVVGVIAALI) constitute a propeptide, removed in mature form.

The protein belongs to the Cu-Zn superoxide dismutase family. Monomer. Cu cation is required as a cofactor. The GPI-anchor is attached to the protein in the endoplasmic reticulum and serves to target the protein to the cell surface. There, the glucosamine-inositol phospholipid moiety is cleaved off and the GPI-modified mannoprotein is covalently attached via its lipidless GPI glycan remnant to the 1,6-beta-glucan of the outer cell wall layer.

It localises to the secreted. It is found in the cell wall. Its subcellular location is the membrane. It catalyses the reaction 2 superoxide + 2 H(+) = H2O2 + O2. Its activity is regulated as follows. Secreted in a disulfide-oxidized form and apo-pools of secreted SOD5 can readily capture extracellular copper for rapid induction of enzyme activity. Functionally, superoxide dismutases serve to convert damaging superoxide radicals, a key form of ROS, to less damaging hydrogen peroxide that can be converted into water by catalase action. Degrades host-derived reactive oxygen species to escape innate immune surveillance. Involved in the occurrence of miconazole-tolerant persisters in biofilms. Persisters are cells that survive high doses of an antimicrobial agent. The unusual attributes of SOD5-like fungal proteins, including the absence of zinc and an open active site that readily captures extracellular copper, make these SODs well suited to meet challenges in zinc and copper availability at the host-pathogen interface. In Candida albicans (strain SC5314 / ATCC MYA-2876) (Yeast), this protein is Cell surface Cu-only superoxide dismutase 5 (SOD5).